The following is a 500-amino-acid chain: Protein farnesyltransferase subunit beta (500 aa).

The tract at residues 117-140 is disordered; it reads LQNDDNNGNNNNRENNQNGGGFGG. A compositionally biased stretch (low complexity) spans 119–133; sequence NDDNNGNNNNRENNQ. PFTB repeat units follow at residues 121-162, 172-213, 220-261, 268-309, and 343-384; these read DNNG…YVIG, REAM…SMLN, ERGV…SILN, MNSL…IIIQ, and QEYV…SLSQ. (2E,6E)-farnesyl diphosphate contacts are provided by residues 246 to 249 and 288 to 291; these read HGGY and RTNK. Zn(2+) contacts are provided by aspartate 294 and cysteine 296. Residue 297–300 coordinates (2E,6E)-farnesyl diphosphate; sequence YSYW. Histidine 372 provides a ligand contact to Zn(2+). Residues 402-451 are disordered; it reads FEQPSPPINKKSTNVFTISNNNNNNNNKNNNSDDNNNNSNNNNNNSENQL. Residues 420–449 are compositionally biased toward low complexity; it reads SNNNNNNNNKNNNSDDNNNNSNNNNNNSEN.

It belongs to the protein prenyltransferase subunit beta family. As to quaternary structure, heterodimer of fntA and fntB (farnesyltransferase). Heterodimer of an alpha and a beta subunit. The cofactor is Zn(2+).

The enzyme catalyses L-cysteinyl-[protein] + (2E,6E)-farnesyl diphosphate = S-(2E,6E)-farnesyl-L-cysteinyl-[protein] + diphosphate. Functionally, catalyzes the transfer of a farnesyl moiety from farnesyl diphosphate to a cysteine at the fourth position from the C-terminus of several proteins. The beta subunit is responsible for peptide-binding. This chain is Protein farnesyltransferase subunit beta (fntB), found in Dictyostelium discoideum (Social amoeba).